We begin with the raw amino-acid sequence, 44 residues long: Large ribosomal subunit protein bL34 (44 aa).

Belongs to the bacterial ribosomal protein bL34 family.

This is Large ribosomal subunit protein bL34 from Wolbachia pipientis wMel.